The following is a 212-amino-acid chain: Pyridoxine/pyridoxamine 5'-phosphate oxidase (212 aa).

Residues 8–11 (RREY) and K66 contribute to the substrate site. FMN-binding positions include 61–66 (RIVLLK), 76–77 (FT), R82, K83, and Q105. Y123, R127, and S131 together coordinate substrate. Residues 140–141 (QS) and W185 contribute to the FMN site. 191 to 193 (RLH) contacts substrate. R195 is an FMN binding site.

Belongs to the pyridoxamine 5'-phosphate oxidase family. In terms of assembly, homodimer. FMN serves as cofactor.

It catalyses the reaction pyridoxamine 5'-phosphate + O2 + H2O = pyridoxal 5'-phosphate + H2O2 + NH4(+). It carries out the reaction pyridoxine 5'-phosphate + O2 = pyridoxal 5'-phosphate + H2O2. Its pathway is cofactor metabolism; pyridoxal 5'-phosphate salvage; pyridoxal 5'-phosphate from pyridoxamine 5'-phosphate: step 1/1. The protein operates within cofactor metabolism; pyridoxal 5'-phosphate salvage; pyridoxal 5'-phosphate from pyridoxine 5'-phosphate: step 1/1. Catalyzes the oxidation of either pyridoxine 5'-phosphate (PNP) or pyridoxamine 5'-phosphate (PMP) into pyridoxal 5'-phosphate (PLP). This is Pyridoxine/pyridoxamine 5'-phosphate oxidase from Shewanella sp. (strain W3-18-1).